Here is a 723-residue protein sequence, read N- to C-terminus: MVLRLRVHSFYNRGISFLVSSSLRNLSTASSLFLNSDQTITEPLVKSELEALVLKQYSHGKFYSLVKNAVSLPCVLLAACQNLSLSANSSGDLADRVSRRFSIEEMGREIREGRFDIRSCCVEFISSSLVLPNLKLKVLIEAIRMVLEIVYDDRFATFSYGGRVGMGRHTAIRYLKNSVENPRWWFRVSFAREMFEERNVDILCGFVGEKINDVMLIEMIKKLFEFGILKIELGGCNSGRGFPQECGLCSILINVYFDGLDKEIQDLRLKMKVKNPRVGTGDEESTGNVFFKPVNIYAVRYLDEILVITSGSKMLTMDLKKRIVDILEQRLELRVDRLNTSIHSAVSEKINFLGMYLQAVPPSVLRPPKSEKAVRAMKKYQRQKDVRKLELRNARERNRKTLGLKIFRHVLKKIKQSNGFKFEGEIENEVRDIFQSWGEEVMQDFMGSLEERWKWHWLLTRGDFLSLRHIREKLPQDLIDAYDEFQEQVDKHLAPTQAKKVLEDEERRVEEEEEQRYAERTVEDLTKLCMKVSAPEELVRKAIKLVGFTNSMGRPRPIIHLVTLEDSDIIKWYARHEKHGSTKKLIRHYTKDLRVSDLDGREEAHFPSEREVKMMGDKNLSDPKPVDGTLSLLLIRLASDEPLHHCAASFCERSDTIMHRVHLLQNRLHINPLDEEKWVPGMGTIHSALNRKCLPLCSTHISDVYLGKITLQDVDSSSFIDLR.

A mitochondrion-targeting transit peptide spans 1–26 (MVLRLRVHSFYNRGISFLVSSSLRNL). Positions 532 to 597 (VSAPEELVRK…HYTKDLRVSD (66 aa)) are intron maturase type-2; degenerate. The THAP-type zinc finger occupies 646-700 (CAASFCERSDTIMHRVHLLQNRLHINPLDEEKWVPGMGTIHSALNRKCLPLCSTH).

It belongs to the plant nuclear intron maturase (nMat) family.

It is found in the mitochondrion. Nuclear-encoded maturase required for splicing of group-II introns in mitochondria. Necessary for mitochondrial biogenesis during early developmental stages. The chain is Nuclear intron maturase 3, mitochondrial from Arabidopsis thaliana (Mouse-ear cress).